Reading from the N-terminus, the 465-residue chain is Uronate isomerase (465 aa).

The protein belongs to the metallo-dependent hydrolases superfamily. Uronate isomerase family.

It catalyses the reaction D-glucuronate = D-fructuronate. It carries out the reaction aldehydo-D-galacturonate = keto-D-tagaturonate. Its pathway is carbohydrate metabolism; pentose and glucuronate interconversion. The protein is Uronate isomerase of Bacillus velezensis (strain DSM 23117 / BGSC 10A6 / LMG 26770 / FZB42) (Bacillus amyloliquefaciens subsp. plantarum).